We begin with the raw amino-acid sequence, 833 residues long: DNA gyrase subunit A (833 aa).

Residues Leu35–Leu498 enclose the Topo IIA-type catalytic domain. Tyr123 functions as the O-(5'-phospho-DNA)-tyrosine intermediate in the catalytic mechanism. The short motif at Gln525–Gly531 is the GyrA-box element. The interval Arg803 to Glu833 is disordered. A compositionally biased stretch (acidic residues) spans Ile806–Arg821.

Belongs to the type II topoisomerase GyrA/ParC subunit family. In terms of assembly, heterotetramer, composed of two GyrA and two GyrB chains. In the heterotetramer, GyrA contains the active site tyrosine that forms a transient covalent intermediate with DNA, while GyrB binds cofactors and catalyzes ATP hydrolysis.

The protein localises to the cytoplasm. It carries out the reaction ATP-dependent breakage, passage and rejoining of double-stranded DNA.. In terms of biological role, a type II topoisomerase that negatively supercoils closed circular double-stranded (ds) DNA in an ATP-dependent manner to modulate DNA topology and maintain chromosomes in an underwound state. Negative supercoiling favors strand separation, and DNA replication, transcription, recombination and repair, all of which involve strand separation. Also able to catalyze the interconversion of other topological isomers of dsDNA rings, including catenanes and knotted rings. Type II topoisomerases break and join 2 DNA strands simultaneously in an ATP-dependent manner. This chain is DNA gyrase subunit A, found in Halalkalibacterium halodurans (strain ATCC BAA-125 / DSM 18197 / FERM 7344 / JCM 9153 / C-125) (Bacillus halodurans).